The sequence spans 1147 residues: Myosin heavy chain IB (1147 aa).

The region spanning 9-677 is the Myosin motor domain; sequence RGVDDLVLMP…TLFHLEECLD (669 aa). 103–110 contributes to the ATP binding site; sequence GESGAGKT. Position 315 is a phosphoserine (S315). Residues 551-573 are actin-binding; it reads CDALMEALSRCSPHYIRCIKPND. Residues 715 to 900 form the TH1 domain; the sequence is KERQRHSVNR…RANIQIGIAT (186 aa). Disordered stretches follow at residues 901 to 954 and 969 to 1089; these read GLPK…YSQP and AAVP…APAA. Composition is skewed to gly residues over residues 916–951 and 975–1079; these read SGGG…GGGY and GRGG…GAGR. The 58-residue stretch at 1090 to 1147 folds into the SH3 domain; the sequence is PAKPQVKALYDYDAQTGDELTFKEGDTIIVHQKDPAGWWEGELNGKRGWVPANYVQDI.

It belongs to the TRAFAC class myosin-kinesin ATPase superfamily. Myosin family. As to quaternary structure, myosin I heavy chain is single-headed. Dimer of a heavy and a light chain. Inability to self-assemble into filaments.

Myosin is a protein that binds to F-actin and has ATPase activity that is activated by F-actin. This is Myosin heavy chain IB (MIB) from Acanthamoeba castellanii (Amoeba).